A 60-amino-acid chain; its full sequence is Large ribosomal subunit protein uL30 (60 aa).

The protein belongs to the universal ribosomal protein uL30 family. In terms of assembly, part of the 50S ribosomal subunit.

In Syntrophobacter fumaroxidans (strain DSM 10017 / MPOB), this protein is Large ribosomal subunit protein uL30.